We begin with the raw amino-acid sequence, 921 residues long: Protein translocase subunit SecA (921 aa).

ATP is bound by residues Gln87, 105–109 (GEGKT), and Asp516. Residues Cys905, Cys907, Cys916, and His917 each coordinate Zn(2+).

Belongs to the SecA family. Monomer and homodimer. Part of the essential Sec protein translocation apparatus which comprises SecA, SecYEG and auxiliary proteins SecDF-YajC and YidC. The cofactor is Zn(2+).

The protein localises to the cell inner membrane. It localises to the cytoplasm. The enzyme catalyses ATP + H2O + cellular proteinSide 1 = ADP + phosphate + cellular proteinSide 2.. Its function is as follows. Part of the Sec protein translocase complex. Interacts with the SecYEG preprotein conducting channel. Has a central role in coupling the hydrolysis of ATP to the transfer of proteins into and across the cell membrane, serving both as a receptor for the preprotein-SecB complex and as an ATP-driven molecular motor driving the stepwise translocation of polypeptide chains across the membrane. This chain is Protein translocase subunit SecA, found in Albidiferax ferrireducens (strain ATCC BAA-621 / DSM 15236 / T118) (Rhodoferax ferrireducens).